The primary structure comprises 497 residues: 4,4'-diaponeurosporene oxygenase (497 aa).

7-19 (VIGGGLGGISAAI) serves as a coordination point for FAD.

It belongs to the carotenoid/retinoid oxidoreductase family. CrtP subfamily. FAD serves as cofactor.

It catalyses the reaction all-trans-4,4'-diaponeurosporene + 2 AH2 + 2 O2 = 4,4'-diaponeurosporenal + 2 A + 3 H2O. It participates in carotenoid biosynthesis; staphyloxanthin biosynthesis; staphyloxanthin from farnesyl diphosphate: step 3/5. Its function is as follows. Involved in the biosynthesis of the yellow-orange carotenoid staphyloxanthin, which plays a role in the virulence via its protective function against oxidative stress. Catalyzes the oxidation of the terminal methyl side group of 4,4'-diaponeurosporene to form 4,4'-diaponeurosporen-4-al. This chain is 4,4'-diaponeurosporene oxygenase, found in Staphylococcus aureus (strain MSSA476).